Consider the following 280-residue polypeptide: uncharacterized protein (280 aa).

10 N-linked (GlcNAc...) asparagine; by host glycosylation sites follow: N75, N98, N107, N143, N158, N170, N192, N207, N224, and N230. Residues 235–255 (AFTYGSWGVAMLLFAAVMVLV) form a helical membrane-spanning segment.

It belongs to the RL11 family.

It is found in the host membrane. This is an uncharacterized protein from Human cytomegalovirus (strain Merlin) (HHV-5).